Consider the following 383-residue polypeptide: ATP phosphoribosyltransferase regulatory subunit (383 aa).

This sequence belongs to the class-II aminoacyl-tRNA synthetase family. HisZ subfamily. As to quaternary structure, heteromultimer composed of HisG and HisZ subunits.

The protein resides in the cytoplasm. It functions in the pathway amino-acid biosynthesis; L-histidine biosynthesis; L-histidine from 5-phospho-alpha-D-ribose 1-diphosphate: step 1/9. Required for the first step of histidine biosynthesis. May allow the feedback regulation of ATP phosphoribosyltransferase activity by histidine. The polypeptide is ATP phosphoribosyltransferase regulatory subunit (Neisseria meningitidis serogroup C / serotype 2a (strain ATCC 700532 / DSM 15464 / FAM18)).